A 480-amino-acid chain; its full sequence is DnaJ homolog subfamily A member 3, mitochondrial (480 aa).

Arg-58 is subject to Omega-N-methylarginine; by CARM1. Positions 93–158 (DYYQILGVPR…VKRKQYDAYG (66 aa)) constitute a J domain. Lys-134 is modified (N6-acetyllysine). A CR-type zinc finger spans residues 223–301 (GVNKEFTVNI…CRGAGQAKQK (79 aa)). Position 236 (Cys-236) interacts with Zn(2+). 4 CXXCXGXG motif repeats span residues 236–243 (CERCNGKG), 253–260 (CHYCGGSG), 275–282 (CRRCGGRG), and 289–296 (CVVCRGAG). The residue at position 238 (Arg-238) is an Omega-N-methylarginine; by CARM1. Cys-239, Cys-253, Cys-256, Cys-275, Cys-278, Cys-289, and Cys-292 together coordinate Zn(2+). The residue at position 293 (Arg-293) is an Omega-N-methylarginine; by CARM1. A Phosphoserine modification is found at Ser-398. The segment covering 443–456 (LTSSGGSTMDSSAG) has biased composition (polar residues). The disordered stretch occupies residues 443-471 (LTSSGGSTMDSSAGSKARREAGEDEEGFL).

Interacts with JAK2, HSPA9B and IFN-gammaR2 chain. Interacts with Ras GTPase-activating protein 1 (RASA1). Isoform 2 interacts with MUSK (via the cytoplasmic domain). In terms of processing, tyrosine phosphorylated. As to expression, widely expressed with highest levels in heart, liver, lung and skeletal muscles. Also expressed in keratinocytes; expression level and distribution is altered in basal cell carcinomas.

The protein localises to the mitochondrion matrix. Its subcellular location is the cytoplasm. It localises to the cytosol. It is found in the postsynaptic cell membrane. In terms of biological role, modulates apoptotic signal transduction or effector structures within the mitochondrial matrix. Affect cytochrome C release from the mitochondria and caspase 3 activation, but not caspase 8 activation. Isoform 1 increases apoptosis triggered by both TNF and the DNA-damaging agent mytomycin C; in sharp contrast, isoform 2 suppresses apoptosis. Can modulate IFN-gamma-mediated transcriptional activity. Isoform 2 may play a role in neuromuscular junction development as an effector of the MUSK signaling pathway. The protein is DnaJ homolog subfamily A member 3, mitochondrial (DNAJA3) of Homo sapiens (Human).